The primary structure comprises 144 residues: Endoribonuclease YbeY (144 aa).

3 residues coordinate Zn(2+): histidine 108, histidine 112, and histidine 118.

The protein belongs to the endoribonuclease YbeY family. Zn(2+) serves as cofactor.

Its subcellular location is the cytoplasm. In terms of biological role, single strand-specific metallo-endoribonuclease involved in late-stage 70S ribosome quality control and in maturation of the 3' terminus of the 16S rRNA. In Phytoplasma australiense, this protein is Endoribonuclease YbeY.